Consider the following 229-residue polypeptide: UPF0758 protein Ppro_3582 (229 aa).

Residues 1-20 (MCPGIREWPEDERPREKMLR) form a disordered region. The segment covering 7-19 (EWPEDERPREKML) has biased composition (basic and acidic residues). Residues 107–229 (RFTSPRQVFD…YLSFVERGVL (123 aa)) enclose the MPN domain. Positions 178, 180, and 191 each coordinate Zn(2+). The JAMM motif motif lies at 178–191 (HNHPTGDPTPSQED).

It belongs to the UPF0758 family.

This is UPF0758 protein Ppro_3582 from Pelobacter propionicus (strain DSM 2379 / NBRC 103807 / OttBd1).